The chain runs to 106 residues: Ferredoxin (106 aa).

[3Fe-4S] cluster is bound by residues Cys8 and Cys16. Residues Cys20, Cys39, Cys42, and Cys45 each coordinate [4Fe-4S] cluster. Residues 30–59 (RMLYIHPDECVDCGACEPVCPVEAIYYEDD) form the 4Fe-4S ferredoxin-type domain. Cys49 contributes to the [3Fe-4S] cluster binding site. Residues 81–106 (PGGASKVGQTDNDPQAIKDLPPQGED) are disordered.

Requires [4Fe-4S] cluster as cofactor. [3Fe-4S] cluster is required as a cofactor.

In terms of biological role, ferredoxins are iron-sulfur proteins that transfer electrons in a wide variety of metabolic reactions. This chain is Ferredoxin (fdxA), found in Mycolicibacterium smegmatis (Mycobacterium smegmatis).